A 399-amino-acid polypeptide reads, in one-letter code: Rhodopsin, G0-coupled (399 aa).

At 1–17 the chain is on the extracellular side; that stretch reads MPFPLNRTDTALVISPS. Residue N6 is glycosylated (N-linked (GlcNAc...) asparagine). A helical membrane pass occupies residues 18-43; it reads EFRIIGIFISICCIIGVLGNLLIIIV. At 44–55 the chain is on the cytoplasmic side; the sequence is FAKRRSVRRPIN. The helical transmembrane segment at 56 to 81 threads the bilayer; the sequence is FFVLNLAVSDLIVALLGYPMTAASAF. Topologically, residues 82 to 95 are extracellular; sequence SNRWIFDNIGCKIY. C92 and C169 are joined by a disulfide. A helical membrane pass occupies residues 96 to 115; sequence AFLCFNSGVISIMTHAALSF. Residues 116-134 are Cytoplasmic-facing; it reads CRYIIICQYGYRKKITQTT. A helical membrane pass occupies residues 135-158; it reads VLRTLFSIWSFAMFWTLSPLFGWS. The Extracellular portion of the chain corresponds to 159 to 182; the sequence is SYVIEVVPVSCSVNWYGHGLGDVS. The helical transmembrane segment at 183 to 210 threads the bilayer; it reads YTISVIVAVYVFPLSIIVFSYGMILQEK. Residues 211 to 240 are Cytoplasmic-facing; that stretch reads VCKDSRKNGIRAQQRYTPRFIQDIEQRVTF. A helical transmembrane segment spans residues 241–263; it reads ISFLMMAAFMVAWTPYAIMSALA. Topologically, residues 264–271 are extracellular; that stretch reads IGSFNVEN. The helical transmembrane segment at 272 to 295 threads the bilayer; the sequence is SFAALPTLFAKASCAYNPFIYAFT. Residue K282 is modified to N6-(retinylidene)lysine. Residues 296–399 are Cytoplasmic-facing; that stretch reads NANFRDTVVE…NTFTADFSVI (104 aa).

The protein belongs to the G-protein coupled receptor 1 family. Opsin subfamily. Post-translationally, phosphorylated on some or all of the serine and threonine residues present in the C-terminal region. Retina. Expressed in the hyperpolarizing cell layer of the photoreceptor cells with its photoreceptive region adjacent to the lens.

It localises to the membrane. Functionally, visual pigments are the light-absorbing molecules that mediate vision. They consist of an apoprotein, opsin, covalently linked to cis-retinal. The polypeptide is Rhodopsin, G0-coupled (SCOP2) (Mizuhopecten yessoensis (Japanese scallop)).